Reading from the N-terminus, the 388-residue chain is Homeobox protein XHOX-3 (388 aa).

Disordered stretches follow at residues 30-109 (AVGS…SDFY) and 131-163 (SAGQCSEPMGGSPVNGSDSSKGGGGSHGSFSAC). Composition is skewed to polar residues over residues 68–81 (ATGQQRSRSPQLRI) and 91–103 (DSLSTKGQHSSSD). The segment at residues 168 to 227 (MRRYRTAFTREQIARLEKEFYRENYVSRPRRCELAAALNLPETTIKVWFQNRRMKDKRQR) is a DNA-binding region (homeobox).

This sequence belongs to the even-skipped homeobox family.

The protein resides in the nucleus. Functionally, may be required for posterior development and development of normal embryonic axial pattern. This chain is Homeobox protein XHOX-3 (xhox3), found in Xenopus laevis (African clawed frog).